The chain runs to 603 residues: Ankyrin repeat and LEM domain-containing protein 2 homolog (603 aa).

A helical; Signal-anchor for type III membrane protein membrane pass occupies residues 2–22; it reads GRKSAILAVILAIIYFRSNFS. ANK repeat units lie at residues 161-190 and 221-250; these read FRYN…NIDF and NSDT…TDRT. Disordered stretches follow at residues 446–465 and 505–538; these read ISEN…DDDD and LPPP…PPPT. Over residues 456-465 the composition is skewed to acidic residues; that stretch reads DSADDEDDDD.

It belongs to the ANKLE2 family. In terms of assembly, interacts with baf-1. Interacts with protein phosphatase 2A (PP2A) components.

It is found in the nucleus membrane. Functionally, involved in mitotic nuclear envelope reassembly by promoting dephosphorylation of baf-1 during mitotic exit. Coordinates the control of baf-1 dephosphorylation by inhibiting VRK1 kinase and promoting dephosphorylation of baf-1 by protein phosphatase 2A (PP2A), thereby facilitating nuclear envelope assembly. It is unclear whether it acts as a real PP2A regulatory subunit or whether it is involved in recruitment of the PP2A complex. The sequence is that of Ankyrin repeat and LEM domain-containing protein 2 homolog (lem-4) from Caenorhabditis elegans.